The sequence spans 345 residues: Uroporphyrinogen decarboxylase (345 aa).

Substrate contacts are provided by residues 26–30 (RQAGR), Asp76, Tyr151, Ser205, and His321.

It belongs to the uroporphyrinogen decarboxylase family. As to quaternary structure, homodimer.

It is found in the cytoplasm. It catalyses the reaction uroporphyrinogen III + 4 H(+) = coproporphyrinogen III + 4 CO2. Its pathway is porphyrin-containing compound metabolism; protoporphyrin-IX biosynthesis; coproporphyrinogen-III from 5-aminolevulinate: step 4/4. Catalyzes the decarboxylation of four acetate groups of uroporphyrinogen-III to yield coproporphyrinogen-III. The polypeptide is Uroporphyrinogen decarboxylase (Phenylobacterium zucineum (strain HLK1)).